The sequence spans 133 residues: NADH dehydrogenase [ubiquinone] 1 alpha subcomplex subunit 6 (133 aa).

Belongs to the complex I LYR family. As to quaternary structure, complex I is composed of at least 49 different subunits.

It localises to the mitochondrion inner membrane. Functionally, accessory subunit of the mitochondrial membrane respiratory chain NADH dehydrogenase (Complex I), that is believed to be not involved in catalysis. Complex I functions in the transfer of electrons from NADH to the respiratory chain. The immediate electron acceptor for the enzyme is believed to be ubiquinone. This is NADH dehydrogenase [ubiquinone] 1 alpha subcomplex subunit 6 from Arabidopsis thaliana (Mouse-ear cress).